The chain runs to 403 residues: Acetate kinase (403 aa).

Asn-7 contacts Mg(2+). Lys-14 serves as a coordination point for ATP. Arg-90 is a substrate binding site. Catalysis depends on Asp-147, which acts as the Proton donor/acceptor. ATP-binding positions include His-207–Gly-211, Asp-283–Arg-285, and Gly-331–Asn-335. Mg(2+) is bound at residue Glu-386.

This sequence belongs to the acetokinase family. In terms of assembly, homodimer. The cofactor is Mg(2+). It depends on Mn(2+) as a cofactor.

It is found in the cytoplasm. It carries out the reaction acetate + ATP = acetyl phosphate + ADP. Its pathway is metabolic intermediate biosynthesis; acetyl-CoA biosynthesis; acetyl-CoA from acetate: step 1/2. Catalyzes the formation of acetyl phosphate from acetate and ATP. Can also catalyze the reverse reaction. This chain is Acetate kinase, found in Thermotoga sp. (strain RQ2).